A 132-amino-acid polypeptide reads, in one-letter code: Small ribosomal subunit protein uS8 (132 aa).

It belongs to the universal ribosomal protein uS8 family. In terms of assembly, part of the 30S ribosomal subunit. Contacts proteins S5 and S12.

Its function is as follows. One of the primary rRNA binding proteins, it binds directly to 16S rRNA central domain where it helps coordinate assembly of the platform of the 30S subunit. This Lactococcus lactis subsp. lactis (strain IL1403) (Streptococcus lactis) protein is Small ribosomal subunit protein uS8.